The chain runs to 667 residues: UvrABC system protein B (667 aa).

The Helicase ATP-binding domain occupies 25–414; sequence TGLQRGDKHQ…GVVVEQIIRP (390 aa). Residue 38–45 participates in ATP binding; that stretch reads GVTGSGKT. The Beta-hairpin motif lies at 91 to 114; the sequence is YYDYYQPEAYVPTTDTFIEKDSSI. Residues 430–596 form the Helicase C-terminal domain; that stretch reads QVDDLIHEIR…TVKKSLRSIL (167 aa). Residues 624 to 659 enclose the UVR domain; the sequence is KNEIARVKEEMLAAAANLEFEKAAELRDRMLELDKL.

This sequence belongs to the UvrB family. In terms of assembly, forms a heterotetramer with UvrA during the search for lesions. Interacts with UvrC in an incision complex.

The protein resides in the cytoplasm. Its function is as follows. The UvrABC repair system catalyzes the recognition and processing of DNA lesions. A damage recognition complex composed of 2 UvrA and 2 UvrB subunits scans DNA for abnormalities. Upon binding of the UvrA(2)B(2) complex to a putative damaged site, the DNA wraps around one UvrB monomer. DNA wrap is dependent on ATP binding by UvrB and probably causes local melting of the DNA helix, facilitating insertion of UvrB beta-hairpin between the DNA strands. Then UvrB probes one DNA strand for the presence of a lesion. If a lesion is found the UvrA subunits dissociate and the UvrB-DNA preincision complex is formed. This complex is subsequently bound by UvrC and the second UvrB is released. If no lesion is found, the DNA wraps around the other UvrB subunit that will check the other stand for damage. The chain is UvrABC system protein B from Syntrophotalea carbinolica (strain DSM 2380 / NBRC 103641 / GraBd1) (Pelobacter carbinolicus).